A 160-amino-acid chain; its full sequence is Cyclic pyranopterin monophosphate synthase (160 aa).

Substrate contacts are provided by residues 75–77 (LCH) and 113–114 (ME). Asp-128 is an active-site residue.

Belongs to the MoaC family. In terms of assembly, homohexamer; trimer of dimers.

It catalyses the reaction (8S)-3',8-cyclo-7,8-dihydroguanosine 5'-triphosphate = cyclic pyranopterin phosphate + diphosphate. Its pathway is cofactor biosynthesis; molybdopterin biosynthesis. Functionally, catalyzes the conversion of (8S)-3',8-cyclo-7,8-dihydroguanosine 5'-triphosphate to cyclic pyranopterin monophosphate (cPMP). This Methylobacterium nodulans (strain LMG 21967 / CNCM I-2342 / ORS 2060) protein is Cyclic pyranopterin monophosphate synthase.